The primary structure comprises 149 residues: Nucleoside diphosphate kinase (149 aa).

ATP-binding residues include Lys-11, Phe-59, Arg-87, Thr-93, Arg-104, and Asn-114. His-117 acts as the Pros-phosphohistidine intermediate in catalysis.

The protein belongs to the NDK family. In terms of assembly, homotetramer. It depends on Mg(2+) as a cofactor.

The protein localises to the cytoplasm. It catalyses the reaction a 2'-deoxyribonucleoside 5'-diphosphate + ATP = a 2'-deoxyribonucleoside 5'-triphosphate + ADP. The enzyme catalyses a ribonucleoside 5'-diphosphate + ATP = a ribonucleoside 5'-triphosphate + ADP. Major role in the synthesis of nucleoside triphosphates other than ATP. The ATP gamma phosphate is transferred to the NDP beta phosphate via a ping-pong mechanism, using a phosphorylated active-site intermediate. This Treponema pallidum (strain Nichols) protein is Nucleoside diphosphate kinase.